The chain runs to 153 residues: Glucose-6-phosphate 1-dehydrogenase (153 aa).

Residues Arg21 and Lys120 each contribute to the NADP(+) site. Lys120 is a binding site for D-glucose 6-phosphate.

Belongs to the glucose-6-phosphate dehydrogenase family.

The protein resides in the cytoplasm. It localises to the cytosol. The catalysed reaction is D-glucose 6-phosphate + NADP(+) = 6-phospho-D-glucono-1,5-lactone + NADPH + H(+). It functions in the pathway carbohydrate degradation; pentose phosphate pathway; D-ribulose 5-phosphate from D-glucose 6-phosphate (oxidative stage): step 1/3. Functionally, cytosolic glucose-6-phosphate dehydrogenase that catalyzes the first and rate-limiting step of the oxidative branch within the pentose phosphate pathway/shunt, an alternative route to glycolysis for the dissimilation of carbohydrates and a major source of reducing power and metabolic intermediates for fatty acid and nucleic acid biosynthetic processes. The polypeptide is Glucose-6-phosphate 1-dehydrogenase (ZW) (Sarcophaga bullata (Grey flesh fly)).